We begin with the raw amino-acid sequence, 360 residues long: Peptide chain release factor 1 (360 aa).

Position 235 is an N5-methylglutamine (Q235).

Belongs to the prokaryotic/mitochondrial release factor family. In terms of processing, methylated by PrmC. Methylation increases the termination efficiency of RF1.

Its subcellular location is the cytoplasm. Peptide chain release factor 1 directs the termination of translation in response to the peptide chain termination codons UAG and UAA. In Cupriavidus pinatubonensis (strain JMP 134 / LMG 1197) (Cupriavidus necator (strain JMP 134)), this protein is Peptide chain release factor 1.